The sequence spans 91 residues: MLIMILIFLIALLGLGLSQTHLLSVLLCLEMMMVSLYLGLGMVSISGLHYPLMIALVLLTFSACEASSGLALLVLISRSHGSDLLKSFNLS.

The next 2 membrane-spanning stretches (helical) occupy residues 2–22 (LIMILIFLIALLGLGLSQTHL) and 38–58 (LGLGMVSISGLHYPLMIALVL).

The protein belongs to the complex I subunit 4L family.

Its subcellular location is the mitochondrion membrane. The catalysed reaction is a ubiquinone + NADH + 5 H(+)(in) = a ubiquinol + NAD(+) + 4 H(+)(out). Functionally, core subunit of the mitochondrial membrane respiratory chain NADH dehydrogenase (Complex I) that is believed to belong to the minimal assembly required for catalysis. Complex I functions in the transfer of electrons from NADH to the respiratory chain. The immediate electron acceptor for the enzyme is believed to be ubiquinone. The protein is NADH-ubiquinone oxidoreductase chain 4L (ND4L) of Branchiostoma floridae (Florida lancelet).